The following is a 258-amino-acid chain: MEKLIIAGREFNSRLFLGTGKFSSNEWMEQSILASGTEMVTVAMKRVDMESTEDDMLKHIVHPHIQLLPNTSGVRNAEEAVFAAQMAREAFGTNWLKLEIHPDPRYLLPDSVETLKATEELVKLGFVVLPYCQADPVLCKQLEEAGAATVMPLGAPIGTNKGLQTKEFLQIIIEQAGIPVVVDAGIGAPSHAAEAMEMGASACLVNTAIAVAGNPIEMAKAFKQAVEAGRTAYEAGLGMQAIGFVAEASSPLTAFLNE.

Lys97 functions as the Schiff-base intermediate with DXP in the catalytic mechanism. 1-deoxy-D-xylulose 5-phosphate is bound by residues Gly158, 184–185 (AG), and 206–207 (NT).

This sequence belongs to the ThiG family. As to quaternary structure, homotetramer. Forms heterodimers with either ThiH or ThiS.

The protein localises to the cytoplasm. The enzyme catalyses [ThiS sulfur-carrier protein]-C-terminal-Gly-aminoethanethioate + 2-iminoacetate + 1-deoxy-D-xylulose 5-phosphate = [ThiS sulfur-carrier protein]-C-terminal Gly-Gly + 2-[(2R,5Z)-2-carboxy-4-methylthiazol-5(2H)-ylidene]ethyl phosphate + 2 H2O + H(+). It participates in cofactor biosynthesis; thiamine diphosphate biosynthesis. Catalyzes the rearrangement of 1-deoxy-D-xylulose 5-phosphate (DXP) to produce the thiazole phosphate moiety of thiamine. Sulfur is provided by the thiocarboxylate moiety of the carrier protein ThiS. In vitro, sulfur can be provided by H(2)S. The protein is Thiazole synthase of Bacteroides fragilis (strain ATCC 25285 / DSM 2151 / CCUG 4856 / JCM 11019 / LMG 10263 / NCTC 9343 / Onslow / VPI 2553 / EN-2).